A 317-amino-acid chain; its full sequence is SWI/SNF-related matrix-associated actin-dependent regulator of chromatin subfamily E member 1-related (317 aa).

Residues 1–22 (MSHGPKQPGAASAPASGKAPGQ) show a composition bias toward low complexity. Residues 1–71 (MSHGPKQPGA…RKKILPNGPK (71 aa)) are disordered. Lysine 31 is covalently cross-linked (Glycyl lysine isopeptide (Lys-Gly) (interchain with G-Cter in SUMO2)). Residues 31–52 (KQERGEGPRAGEKGSHEEEPVK) are compositionally biased toward basic and acidic residues. Basic residues predominate over residues 53-65 (KRGWPKGKKRKKI). The segment at residues 70–138 (PKAPVTGYVR…QYMKELRAYQ (69 aa)) is a DNA-binding region (HMG box). Serine 160 carries the post-translational modification Phosphoserine. A coiled-coil region spans residues 190–257 (EEFLDQNKAR…LQQQLQAVRQ (68 aa)).

Component of a BHC histone deacetylase complex that contains HDAC1, HDAC2, HMG20B/BRAF35, KDM1A, RCOR1/CoREST and PHF21A/BHC80. The BHC complex may also contain ZMYM2, ZNF217, ZMYM3, GSE1 and GTF2I. Interacts with the BRCA2 tumor suppressor protein.

It localises to the nucleus. The protein localises to the chromosome. Required for correct progression through G2 phase of the cell cycle and entry into mitosis. Required for RCOR1/CoREST mediated repression of neuronal specific gene promoters. The sequence is that of SWI/SNF-related matrix-associated actin-dependent regulator of chromatin subfamily E member 1-related (HMG20B) from Bos taurus (Bovine).